Consider the following 208-residue polypeptide: FMN-dependent NADH:quinone oxidoreductase (208 aa).

FMN contacts are provided by residues histidine 10, 17 to 19, 104 to 107, 148 to 153, and aspartate 184; these read SRS, MWNL, and SNGGFY.

Belongs to the azoreductase type 1 family. As to quaternary structure, homodimer. FMN serves as cofactor.

It catalyses the reaction 2 a quinone + NADH + H(+) = 2 a 1,4-benzosemiquinone + NAD(+). The catalysed reaction is N,N-dimethyl-1,4-phenylenediamine + anthranilate + 2 NAD(+) = 2-(4-dimethylaminophenyl)diazenylbenzoate + 2 NADH + 2 H(+). Quinone reductase that provides resistance to thiol-specific stress caused by electrophilic quinones. Functionally, also exhibits azoreductase activity. Catalyzes the reductive cleavage of the azo bond in aromatic azo compounds to the corresponding amines. Requires NADH, but not NADPH, as an electron donor for its activity. The enzyme can also reduce a wide range of sulfonated azo dyes. The substrate preference order is methyl Red &gt; Orange II &gt; Ponceau BS &gt; Ponceau S &gt; Orange G &gt; Amaranth. The chain is FMN-dependent NADH:quinone oxidoreductase from Enterococcus faecalis (strain ATCC 700802 / V583).